Reading from the N-terminus, the 198-residue chain is CXXC-type zinc finger protein 4 (198 aa).

Positions 114–134 are disordered; that stretch reads NHSSSSSSSSGGAGGANPAKK. Residues 132-173 form a CXXC-type zinc finger; that stretch reads AKKKRKRCGVCVPCKRLINCGVCSSCRNRKTGHQICKFRKCE. 6 residues coordinate Zn(2+): Cys-139, Cys-142, Cys-145, Cys-151, Cys-154, and Cys-157. The interaction with DVL1 stretch occupies residues 161–166; the sequence is KTGHQI. Residues Cys-167 and Cys-172 each coordinate Zn(2+).

As to quaternary structure, interacts with the PDZ domain of DVL1.

It is found in the cytoplasm. In terms of biological role, acts as a negative regulator of the Wnt signaling pathway via its interaction with DVL1. Binds preferentially to DNA containing cytidine-phosphate-guanosine (CpG) dinucleotides over CpH (H=A, T, and C), hemimethylated-CpG and hemimethylated-hydroxymethyl-CpG. This is CXXC-type zinc finger protein 4 (CXXC4) from Homo sapiens (Human).